We begin with the raw amino-acid sequence, 75 residues long: Dermaseptin-SP5 (75 aa).

Residues 1 to 22 form the signal peptide; the sequence is MAFLKKSLFLVLFLGLVSLSMC. Positions 23–45 are excised as a propeptide; it reads EEEKRENEVEEEQEDDEQSELRR. The segment at 26 to 46 is disordered; the sequence is KRENEVEEEQEDDEQSELRRS. The span at 30–40 shows a compositional bias: acidic residues; it reads EVEEEQEDDEQ. Proline amide is present on Pro-72. Residues 74 to 75 constitute a propeptide that is removed on maturation; the sequence is EQ.

It belongs to the frog skin active peptide (FSAP) family. Dermaseptin subfamily. In terms of tissue distribution, expressed by the skin glands.

It localises to the secreted. Its subcellular location is the target cell membrane. Functionally, antimicrobial peptide with weak activity against Gram-positive and Gram-negative bacteria and fungi. Has been tested against E.coli (MIC=96.06-256 uM), S.aureus (MIC&gt;192.12 uM), K.pneumoniae (MIC&gt;189.00 uM) and C.albicans (MIC=384.24-1024 uM). Probably acts by disturbing membrane functions with its alpha-helical amphipathic structure. May penetrate bacterial membranes, but stay at the mammalian membrane surface. Does not show hemolytic activity. Does not interact at all with cardiolipin. The protein is Dermaseptin-SP5 of Agalychnis spurrelli (Gliding leaf frog).